The sequence spans 504 residues: Maturase K (504 aa).

The protein belongs to the intron maturase 2 family. MatK subfamily.

The protein resides in the plastid. It localises to the chloroplast. Functionally, usually encoded in the trnK tRNA gene intron. Probably assists in splicing its own and other chloroplast group II introns. The protein is Maturase K of Actinidia chinensis (Kiwi).